We begin with the raw amino-acid sequence, 183 residues long: Probable RNA 2'-phosphotransferase (183 aa).

It belongs to the KptA/TPT1 family.

Functionally, removes the 2'-phosphate from RNA via an intermediate in which the phosphate is ADP-ribosylated by NAD followed by a presumed transesterification to release the RNA and generate ADP-ribose 1''-2''-cyclic phosphate (APPR&gt;P). May function as an ADP-ribosylase. The sequence is that of Probable RNA 2'-phosphotransferase from Clostridium perfringens (strain 13 / Type A).